The chain runs to 73 residues: uncharacterized protein (73 aa).

The next 2 membrane-spanning stretches (helical) occupy residues leucine 7–leucine 27 and tyrosine 47–leucine 67.

Its subcellular location is the cell membrane. This is an uncharacterized protein from Methanocaldococcus jannaschii (strain ATCC 43067 / DSM 2661 / JAL-1 / JCM 10045 / NBRC 100440) (Methanococcus jannaschii).